A 209-amino-acid chain; its full sequence is Ribosomal RNA large subunit methyltransferase E (209 aa).

5 residues coordinate S-adenosyl-L-methionine: G63, W65, D83, D99, and D124. K164 functions as the Proton acceptor in the catalytic mechanism.

This sequence belongs to the class I-like SAM-binding methyltransferase superfamily. RNA methyltransferase RlmE family.

Its subcellular location is the cytoplasm. It catalyses the reaction uridine(2552) in 23S rRNA + S-adenosyl-L-methionine = 2'-O-methyluridine(2552) in 23S rRNA + S-adenosyl-L-homocysteine + H(+). Specifically methylates the uridine in position 2552 of 23S rRNA at the 2'-O position of the ribose in the fully assembled 50S ribosomal subunit. This Shewanella oneidensis (strain ATCC 700550 / JCM 31522 / CIP 106686 / LMG 19005 / NCIMB 14063 / MR-1) protein is Ribosomal RNA large subunit methyltransferase E.